The primary structure comprises 349 residues: MEAVKAEAWEGAAVAQDLLALGYGGVPGAASRGASCPDFRGLCVRLAAELATLGALEQQREAGAEVLSAGDGPGAEEDFLRQLGSLLRELHCPDRALCGGDGAAALREPGAGLRLLRFLCSELQATRLLCLRSLLDPSPRPPLGEGVVEGAGMVQELDLTLQALGLPRPAPGTPASQLLQELHAKISELQPSLPPGSLQPLLSCSLDAPRWEALESLSQSLRDQYRCRRCLLLKRLDLTTSAFHWSDRAEAQGEAMRAVLIPIREVLTPESDISIAHVLAARADLSCLVPATSVAVRRGTCCAINKVLMGNVPDRGGRPNELEPPMPTWRSRREDGGPQCWGRKKKKKK.

A disordered region spans residues P313–K349.

This sequence belongs to the FAM98 family.

The polypeptide is Protein FAM98C (FAM98C) (Homo sapiens (Human)).